The sequence spans 346 residues: S-adenosylmethionine:tRNA ribosyltransferase-isomerase (346 aa).

It belongs to the QueA family. As to quaternary structure, monomer.

The protein localises to the cytoplasm. The catalysed reaction is 7-aminomethyl-7-carbaguanosine(34) in tRNA + S-adenosyl-L-methionine = epoxyqueuosine(34) in tRNA + adenine + L-methionine + 2 H(+). It participates in tRNA modification; tRNA-queuosine biosynthesis. Transfers and isomerizes the ribose moiety from AdoMet to the 7-aminomethyl group of 7-deazaguanine (preQ1-tRNA) to give epoxyqueuosine (oQ-tRNA). This Neisseria meningitidis serogroup C (strain 053442) protein is S-adenosylmethionine:tRNA ribosyltransferase-isomerase.